The sequence spans 486 residues: Glutamate--tRNA ligase 1 (486 aa).

Residues 9–19 (PSPTGMLHIGG) carry the 'HIGH' region motif. The 'KMSKS' region signature appears at 259–263 (KLSKR). Lys-262 provides a ligand contact to ATP.

Belongs to the class-I aminoacyl-tRNA synthetase family. Glutamate--tRNA ligase type 1 subfamily. Monomer.

The protein localises to the cytoplasm. The catalysed reaction is tRNA(Glu) + L-glutamate + ATP = L-glutamyl-tRNA(Glu) + AMP + diphosphate. Functionally, catalyzes the attachment of glutamate to tRNA(Glu) in a two-step reaction: glutamate is first activated by ATP to form Glu-AMP and then transferred to the acceptor end of tRNA(Glu). This Hyphomonas neptunium (strain ATCC 15444) protein is Glutamate--tRNA ligase 1.